Reading from the N-terminus, the 527-residue chain is Beta-glucosidase 19 (527 aa).

An N-terminal signal peptide occupies residues 1 to 21; the sequence is MKIPLLGLLLLISLVGSPTRA. Residues Gln52 and His155 each contribute to the a beta-D-glucoside site. Asn183 carries N-linked (GlcNAc...) asparagine glycosylation. 200 to 201 contributes to the a beta-D-glucoside binding site; that stretch reads NE. The active-site Proton donor is Glu201. An intrachain disulfide couples Cys220 to Cys231. A beta-D-glucoside contacts are provided by Tyr345 and Glu418. Catalysis depends on Glu418, which acts as the Nucleophile. Asn462 carries N-linked (GlcNAc...) asparagine glycosylation. Residues Trp469, 476–477, and Phe485 each bind a beta-D-glucoside; that span reads EW. Residue Asn495 is glycosylated (N-linked (GlcNAc...) asparagine). Residues 524–527 carry the Prevents secretion from ER motif; the sequence is HEEL.

Belongs to the glycosyl hydrolase 1 family.

Its subcellular location is the endoplasmic reticulum lumen. It carries out the reaction Hydrolysis of terminal, non-reducing beta-D-glucosyl residues with release of beta-D-glucose.. The sequence is that of Beta-glucosidase 19 from Arabidopsis thaliana (Mouse-ear cress).